The following is a 141-amino-acid chain: Nucleoside diphosphate kinase (141 aa).

K11, F59, R87, T93, R104, and N114 together coordinate ATP. The active-site Pros-phosphohistidine intermediate is the H117.

Belongs to the NDK family. In terms of assembly, homotetramer. Requires Mg(2+) as cofactor.

The protein resides in the cytoplasm. It carries out the reaction a 2'-deoxyribonucleoside 5'-diphosphate + ATP = a 2'-deoxyribonucleoside 5'-triphosphate + ADP. The enzyme catalyses a ribonucleoside 5'-diphosphate + ATP = a ribonucleoside 5'-triphosphate + ADP. Its function is as follows. Major role in the synthesis of nucleoside triphosphates other than ATP. The ATP gamma phosphate is transferred to the NDP beta phosphate via a ping-pong mechanism, using a phosphorylated active-site intermediate. This is Nucleoside diphosphate kinase from Pseudomonas putida (strain GB-1).